The chain runs to 450 residues: Tubulin alpha-3 chain (450 aa).

GTP is bound by residues glutamine 11, glutamate 71, glycine 144, threonine 145, threonine 179, asparagine 206, and asparagine 228. Mg(2+) is bound at residue glutamate 71. Glutamate 254 is a catalytic residue.

This sequence belongs to the tubulin family. Dimer of alpha and beta chains. A typical microtubule is a hollow water-filled tube with an outer diameter of 25 nm and an inner diameter of 15 nM. Alpha-beta heterodimers associate head-to-tail to form protofilaments running lengthwise along the microtubule wall with the beta-tubulin subunit facing the microtubule plus end conferring a structural polarity. Microtubules usually have 13 protofilaments but different protofilament numbers can be found in some organisms and specialized cells. Mg(2+) is required as a cofactor. Post-translationally, undergoes a tyrosination/detyrosination cycle, the cyclic removal and re-addition of a C-terminal tyrosine residue by the enzymes tubulin tyrosine carboxypeptidase (TTCP) and tubulin tyrosine ligase (TTL), respectively.

The protein localises to the cytoplasm. It localises to the cytoskeleton. The enzyme catalyses GTP + H2O = GDP + phosphate + H(+). Its function is as follows. Tubulin is the major constituent of microtubules, a cylinder consisting of laterally associated linear protofilaments composed of alpha- and beta-tubulin heterodimers. Microtubules grow by the addition of GTP-tubulin dimers to the microtubule end, where a stabilizing cap forms. Below the cap, tubulin dimers are in GDP-bound state, owing to GTPase activity of alpha-tubulin. The chain is Tubulin alpha-3 chain (TUBA3) from Eleusine indica (Goosegrass).